We begin with the raw amino-acid sequence, 66 residues long: Metallothionein (66 aa).

Position 1 is an N-acetylserine (Ser-1). 18 residues coordinate Cd(2+): Cys-9, Cys-13, Cys-18, Cys-20, Cys-24, Cys-26, Cys-30, Cys-32, Cys-35, Cys-38, Cys-40, Cys-45, Cys-47, Cys-51, Cys-57, Cys-59, Cys-63, and Cys-65.

This sequence belongs to the metallothionein superfamily. Type 2 family.

In terms of biological role, the metallothioneins are involved in the cellular sequestration of toxic metal ions and regulation of essential trace elements. This Arianta arbustorum (Land snail) protein is Metallothionein.